Reading from the N-terminus, the 132-residue chain is Small ribosomal subunit protein uS8 (132 aa).

This sequence belongs to the universal ribosomal protein uS8 family. As to quaternary structure, part of the 30S ribosomal subunit. Contacts proteins S5 and S12.

In terms of biological role, one of the primary rRNA binding proteins, it binds directly to 16S rRNA central domain where it helps coordinate assembly of the platform of the 30S subunit. This Azorhizobium caulinodans (strain ATCC 43989 / DSM 5975 / JCM 20966 / LMG 6465 / NBRC 14845 / NCIMB 13405 / ORS 571) protein is Small ribosomal subunit protein uS8.